The sequence spans 104 residues: Small integral membrane protein 19 (104 aa).

The chain crosses the membrane as a helical span at residues 20–42 (AWNEATNVYLLVILVSFALLMYA).

The protein belongs to the SMIM19 family.

The protein localises to the membrane. This is Small integral membrane protein 19 (smim19) from Danio rerio (Zebrafish).